A 438-amino-acid polypeptide reads, in one-letter code: 3-phosphoshikimate 1-carboxyvinyltransferase (438 aa).

Lysine 23, serine 24, and arginine 28 together coordinate 3-phosphoshikimate. Phosphoenolpyruvate is bound at residue lysine 23. Phosphoenolpyruvate contacts are provided by glycine 94 and arginine 122. 3-phosphoshikimate is bound by residues serine 167, glutamine 169, aspartate 321, and lysine 348. Residue glutamine 169 coordinates phosphoenolpyruvate. Aspartate 321 acts as the Proton acceptor in catalysis. The phosphoenolpyruvate site is built by arginine 352 and arginine 393.

The protein belongs to the EPSP synthase family. Monomer.

The protein localises to the cytoplasm. It carries out the reaction 3-phosphoshikimate + phosphoenolpyruvate = 5-O-(1-carboxyvinyl)-3-phosphoshikimate + phosphate. The protein operates within metabolic intermediate biosynthesis; chorismate biosynthesis; chorismate from D-erythrose 4-phosphate and phosphoenolpyruvate: step 6/7. Its function is as follows. Catalyzes the transfer of the enolpyruvyl moiety of phosphoenolpyruvate (PEP) to the 5-hydroxyl of shikimate-3-phosphate (S3P) to produce enolpyruvyl shikimate-3-phosphate and inorganic phosphate. In Helicobacter hepaticus (strain ATCC 51449 / 3B1), this protein is 3-phosphoshikimate 1-carboxyvinyltransferase.